The following is a 478-amino-acid chain: Cytochrome c-552 (478 aa).

A signal peptide spans 1-26 (MTRIKINARRIFSLLIPFFFFTSVHA). Residue His-94 participates in heme c binding. Heme is bound by residues Cys-122, Cys-125, and Lys-126. The heme c site is built by Cys-160, Cys-163, His-164, Cys-209, Cys-212, and His-213. Ca(2+) contacts are provided by Glu-215, Tyr-216, Lys-261, and Gln-263. Position 216 (Tyr-216) interacts with substrate. Residue His-264 coordinates substrate. The heme c site is built by His-275, Cys-282, Cys-285, His-286, His-301, Cys-314, Cys-317, His-318, and His-393.

The protein belongs to the cytochrome c-552 family. Ca(2+) serves as cofactor. Requires heme c as cofactor.

It is found in the periplasm. The enzyme catalyses 6 Fe(III)-[cytochrome c] + NH4(+) + 2 H2O = 6 Fe(II)-[cytochrome c] + nitrite + 8 H(+). It participates in nitrogen metabolism; nitrate reduction (assimilation). In terms of biological role, catalyzes the reduction of nitrite to ammonia, consuming six electrons in the process. The polypeptide is Cytochrome c-552 (Escherichia coli (strain ATCC 8739 / DSM 1576 / NBRC 3972 / NCIMB 8545 / WDCM 00012 / Crooks)).